The following is a 102-amino-acid chain: uncharacterized protein (102 aa).

Transmembrane regions (helical) follow at residues 1-21 (MVPL…LRPV), 42-62 (SIID…LILV), and 68-88 (SIHA…FSIV).

The protein resides in the membrane. This is an uncharacterized protein from Saccharomyces cerevisiae (strain ATCC 204508 / S288c) (Baker's yeast).